A 270-amino-acid polypeptide reads, in one-letter code: uncharacterized protein (270 aa).

It to T.pallidum TP_0127, TP_0315 and TP_0618.

This is an uncharacterized protein from Treponema pallidum (strain Nichols).